Reading from the N-terminus, the 223-residue chain is Icarapin (223 aa).

An N-terminal signal peptide occupies residues 1-19 (MKTLGVLFIAAWFIACTHS). N-linked (GlcNAc...) asparagine glycosylation is found at Asn126, Asn142, Asn168, and Asn193. Polar residues predominate over residues 186-203 (LPTLIGKNETSTQSSRSV). Residues 186 to 223 (LPTLIGKNETSTQSSRSVESVEDFDNEIPKNQGDVLTA) form a disordered region.

As to expression, expressed by the venom duct.

The protein resides in the secreted. The chain is Icarapin from Apis mellifera carnica (Carniolan honeybee).